Here is a 200-residue protein sequence, read N- to C-terminus: ATP-dependent Clp protease proteolytic subunit (200 aa).

S105 acts as the Nucleophile in catalysis. The active site involves H130.

This sequence belongs to the peptidase S14 family. Fourteen ClpP subunits assemble into 2 heptameric rings which stack back to back to give a disk-like structure with a central cavity, resembling the structure of eukaryotic proteasomes.

It localises to the cytoplasm. The enzyme catalyses Hydrolysis of proteins to small peptides in the presence of ATP and magnesium. alpha-casein is the usual test substrate. In the absence of ATP, only oligopeptides shorter than five residues are hydrolyzed (such as succinyl-Leu-Tyr-|-NHMec, and Leu-Tyr-Leu-|-Tyr-Trp, in which cleavage of the -Tyr-|-Leu- and -Tyr-|-Trp bonds also occurs).. In terms of biological role, cleaves peptides in various proteins in a process that requires ATP hydrolysis. Has a chymotrypsin-like activity. Plays a major role in the degradation of misfolded proteins. This Hydrogenovibrio crunogenus (strain DSM 25203 / XCL-2) (Thiomicrospira crunogena) protein is ATP-dependent Clp protease proteolytic subunit.